A 479-amino-acid chain; its full sequence is Adenosylhomocysteinase (479 aa).

Residues T56, D134, and E200 each coordinate substrate. Residue T201–T203 coordinates NAD(+). Residues K230 and D234 each coordinate substrate. Residues N235, G264–G269, E287, N322, I343–H345, and N391 contribute to the NAD(+) site.

It belongs to the adenosylhomocysteinase family. In terms of assembly, homotetramer. NAD(+) serves as cofactor.

The enzyme catalyses S-adenosyl-L-homocysteine + H2O = L-homocysteine + adenosine. It participates in amino-acid biosynthesis; L-homocysteine biosynthesis; L-homocysteine from S-adenosyl-L-homocysteine: step 1/1. Adenosylhomocysteine is a competitive inhibitor of S-adenosyl-L-methionine-dependent methyl transferase reactions; therefore adenosylhomocysteinase may play a key role in the control of methylations via regulation of the intracellular concentration of adenosylhomocysteine. The polypeptide is Adenosylhomocysteinase (Plasmodium falciparum (isolate 3D7)).